The primary structure comprises 403 residues: S-adenosylmethionine synthase (403 aa).

Residue histidine 17 participates in ATP binding. Position 19 (aspartate 19) interacts with Mg(2+). Residue glutamate 45 participates in K(+) binding. Glutamate 58 and glutamine 101 together coordinate L-methionine. Residues 101–111 (QSPDIAMGVDR) are flexible loop. Residues 177–179 (DGK), 244–245 (RF), aspartate 253, 259–260 (RK), alanine 276, and lysine 280 each bind ATP. Aspartate 253 serves as a coordination point for L-methionine. Lysine 284 is a binding site for L-methionine.

This sequence belongs to the AdoMet synthase family. Homotetramer; dimer of dimers. The cofactor is Mg(2+). It depends on K(+) as a cofactor.

It is found in the cytoplasm. The catalysed reaction is L-methionine + ATP + H2O = S-adenosyl-L-methionine + phosphate + diphosphate. It participates in amino-acid biosynthesis; S-adenosyl-L-methionine biosynthesis; S-adenosyl-L-methionine from L-methionine: step 1/1. Catalyzes the formation of S-adenosylmethionine (AdoMet) from methionine and ATP. The overall synthetic reaction is composed of two sequential steps, AdoMet formation and the subsequent tripolyphosphate hydrolysis which occurs prior to release of AdoMet from the enzyme. The sequence is that of S-adenosylmethionine synthase from Geobacillus kaustophilus (strain HTA426).